A 470-amino-acid chain; its full sequence is MNPNQKIITIGSISIAIGIISLMLQIGNIISIWASHSIQTGSQNHTGICNQRIITYENSTWVNHTYVNINNTNVVAGKDKTSVTLAGNSSLCSISGWAIYTKDNSIRIGSKGDVFVMREPFISCSHLECRTFFLTQGALLNDKHSNGTVKDRSPYRALMSCPLGEAPSPYNSKFESVAWSASACHDGMGWLTIGISGPDNGAVAVLKYNGIITETIKSWKKRILRTQESECVCVNGSCFTIMTDGPSNGAASYKIFKIEKGKVIKSIELNAPNSHYEECSCYPDTGTVMCVCRDNWHGSNRPWVSFNQNLDYQIGYICSGVFGDNPRPKDGEGSCNPVTVDGADGVKGFSYKYGNGVWIGRTKSNRLRKGFEMIWDPNGWTDTDSDFSVKQDVVAITDWSGYSGSFVQHPELTGLDCIRPCFWVELVRGRPRENTTIWTSGSSISFCGVNSDTANWSWPDGAELPFTIDK.

Residues 1 to 6 (MNPNQK) lie on the Intravirion side of the membrane. Residues 7-27 (IITIGSISIAIGIISLMLQIG) traverse the membrane as a helical segment. The segment at 11-33 (GSISIAIGIISLMLQIGNIISIW) is involved in apical transport and lipid raft association. Residues 28 to 470 (NIISIWASHS…GAELPFTIDK (443 aa)) are Virion surface-facing. Positions 36–90 (HSIQTGSQNHTGICNQRIITYENSTWVNHTYVNINNTNVVAGKDKTSVTLAGNSS) are hypervariable stalk region. N-linked (GlcNAc...) asparagine; by host glycans are attached at residues asparagine 44, asparagine 58, asparagine 63, asparagine 70, and asparagine 88. Positions 91 to 470 (LCSISGWAIY…GAELPFTIDK (380 aa)) are head of neuraminidase. 8 cysteine pairs are disulfide-bonded: cysteine 92-cysteine 417, cysteine 124-cysteine 129, cysteine 184-cysteine 231, cysteine 233-cysteine 238, cysteine 279-cysteine 292, cysteine 281-cysteine 290, cysteine 318-cysteine 335, and cysteine 421-cysteine 447. Residue arginine 118 participates in substrate binding. Asparagine 146 carries N-linked (GlcNAc...) asparagine; by host glycosylation. Aspartate 151 functions as the Proton donor/acceptor in the catalytic mechanism. Residue arginine 152 coordinates substrate. N-linked (GlcNAc...) asparagine; by host glycosylation occurs at asparagine 235. 277–278 (EE) contributes to the substrate binding site. Arginine 293 contacts substrate. Ca(2+)-binding residues include aspartate 294, glycine 298, and aspartate 324. A substrate-binding site is contributed by arginine 368. Tyrosine 402 acts as the Nucleophile in catalysis. N-linked (GlcNAc...) asparagine; by host glycosylation is found at asparagine 434 and asparagine 455.

This sequence belongs to the glycosyl hydrolase 34 family. Homotetramer. Ca(2+) is required as a cofactor. In terms of processing, N-glycosylated.

It localises to the virion membrane. Its subcellular location is the host apical cell membrane. It carries out the reaction Hydrolysis of alpha-(2-&gt;3)-, alpha-(2-&gt;6)-, alpha-(2-&gt;8)- glycosidic linkages of terminal sialic acid residues in oligosaccharides, glycoproteins, glycolipids, colominic acid and synthetic substrates.. Inhibited by the neuraminidase inhibitors zanamivir (Relenza) and oseltamivir (Tamiflu). These drugs interfere with the release of progeny virus from infected cells and are effective against all influenza strains. Resistance to neuraminidase inhibitors is quite rare. Catalyzes the removal of terminal sialic acid residues from viral and cellular glycoconjugates. Cleaves off the terminal sialic acids on the glycosylated HA during virus budding to facilitate virus release. Additionally helps virus spread through the circulation by further removing sialic acids from the cell surface. These cleavages prevent self-aggregation and ensure the efficient spread of the progeny virus from cell to cell. Otherwise, infection would be limited to one round of replication. Described as a receptor-destroying enzyme because it cleaves a terminal sialic acid from the cellular receptors. May facilitate viral invasion of the upper airways by cleaving the sialic acid moieties on the mucin of the airway epithelial cells. Likely to plays a role in the budding process through its association with lipid rafts during intracellular transport. May additionally display a raft-association independent effect on budding. Plays a role in the determination of host range restriction on replication and virulence. Sialidase activity in late endosome/lysosome traffic seems to enhance virus replication. The polypeptide is Neuraminidase (Aves (Human)).